The primary structure comprises 614 residues: UvrABC system protein C (614 aa).

The GIY-YIG domain maps to 16-94 (SRPGVYRMFG…VKSLKPRFNV (79 aa)). A UVR domain is found at 204–239 (GELQKRLASEMEAASEAMEFETAARLRDRIRAIAHV).

Belongs to the UvrC family. As to quaternary structure, interacts with UvrB in an incision complex.

The protein resides in the cytoplasm. Its function is as follows. The UvrABC repair system catalyzes the recognition and processing of DNA lesions. UvrC both incises the 5' and 3' sides of the lesion. The N-terminal half is responsible for the 3' incision and the C-terminal half is responsible for the 5' incision. This is UvrABC system protein C from Hyphomonas neptunium (strain ATCC 15444).